Here is a 181-residue protein sequence, read N- to C-terminus: Transcriptional repressor NrdR (181 aa).

A zinc finger lies at 3–34 (CPYCQHTDSRVLESRSTGAGRSIRRRRECLSC). In terms of domain architecture, ATP-cone spans 49 to 139 (ISVIKRNGQS…VYRQFQGVDD (91 aa)).

Belongs to the NrdR family. The cofactor is Zn(2+).

Functionally, negatively regulates transcription of bacterial ribonucleotide reductase nrd genes and operons by binding to NrdR-boxes. In Picosynechococcus sp. (strain ATCC 27264 / PCC 7002 / PR-6) (Agmenellum quadruplicatum), this protein is Transcriptional repressor NrdR.